The primary structure comprises 117 residues: Hainantoxin-XV-2 (117 aa).

The first 20 residues, 1 to 20 (MKLCAVIIASLLVCVAVASS), serve as a signal peptide directing secretion. The interval 20–55 (SSDNQKEFAQEKEMTREETQSLGEHEKDDEVTGSEE) is disordered. Positions 21 to 56 (SDNQKEFAQEKEMTREETQSLGEHEKDDEVTGSEER) are excised as a propeptide. A compositionally biased stretch (basic and acidic residues) spans 23 to 55 (NQKEFAQEKEMTREETQSLGEHEKDDEVTGSEE). 4 cysteine pairs are disulfide-bonded: cysteine 58–cysteine 72, cysteine 65–cysteine 78, cysteine 69–cysteine 115, and cysteine 71–cysteine 91.

It belongs to the neurotoxin 03 (Tx2) family. 02 subfamily. HNTX-XV sub-subfamily. Expressed by the venom gland.

The protein resides in the secreted. Putative ion channel inhibitor. The chain is Hainantoxin-XV-2 from Cyriopagopus hainanus (Chinese bird spider).